Here is a 298-residue protein sequence, read N- to C-terminus: Developmental pluripotency-associated protein 2 (298 aa).

The interval 36-61 (NMEQMEPSVSSTSDVKLEKPKKYNPG) is disordered. The region spanning 92 to 126 (INKVCRDTLRDWCQQLGLSTNGKKIEVYLRLHRHA) is the SAP domain.

As to quaternary structure, interacts with DPPA4. Expressed in embryonic stem cells. No expression is seen in 5 months embryo, mesenchymal stem cells, embryonic fibrocytes and adult tissues.

The protein resides in the nucleus. Its function is as follows. Binds to target gene promoters, including NKX2-5 and SYCE1, but not GATA4, and may be involved in the maintenance of the active epigenetic status of these genes. The protein is Developmental pluripotency-associated protein 2 (DPPA2) of Homo sapiens (Human).